Reading from the N-terminus, the 47-residue chain is Delta-actitoxin-Cgg1b (47 aa).

Residue Pro3 is modified to Hydroxyproline. 3 disulfide bridges follow: Cys4–Cys44, Cys6–Cys34, and Cys27–Cys45.

The protein belongs to the sea anemone sodium channel inhibitory toxin family. Type I subfamily.

It localises to the secreted. It is found in the nematocyst. Its function is as follows. Binds voltage-dependently at site 3 of sodium channels (Nav) and inhibits the inactivation, thereby blocking neuronal transmission. This is Delta-actitoxin-Cgg1b from Condylactis gigantea (Giant Caribbean anemone).